The sequence spans 218 residues: Peptide deformylase 1 (218 aa).

Fe cation contacts are provided by Cys-126 and His-168. Glu-169 is a catalytic residue. Residue His-172 coordinates Fe cation.

The protein belongs to the polypeptide deformylase family. The cofactor is Fe(2+).

The enzyme catalyses N-terminal N-formyl-L-methionyl-[peptide] + H2O = N-terminal L-methionyl-[peptide] + formate. In terms of biological role, removes the formyl group from the N-terminal Met of newly synthesized proteins. Requires at least a dipeptide for an efficient rate of reaction. N-terminal L-methionine is a prerequisite for activity but the enzyme has broad specificity at other positions. This Streptomyces coelicolor (strain ATCC BAA-471 / A3(2) / M145) protein is Peptide deformylase 1.